Reading from the N-terminus, the 124-residue chain is MVIKRGFIGNTPKPSRCKRTKPIFREPNSPVNGGLVYNHPLHTAAAVKEAFSENRGFRTCHVCHRKNNMRLKVGTCESCKKHTCAICIRQCHKCESNVCSMCSKQERTFESEAFCPSCYPLDTY.

The protein resides in the cytoplasm. Its subcellular location is the nucleus. This is an uncharacterized protein from Schizosaccharomyces pombe (strain 972 / ATCC 24843) (Fission yeast).